We begin with the raw amino-acid sequence, 807 residues long: Probable phosphoketolase (807 aa).

The protein belongs to the XFP family. It depends on thiamine diphosphate as a cofactor.

This Nitrosospira multiformis (strain ATCC 25196 / NCIMB 11849 / C 71) protein is Probable phosphoketolase.